The chain runs to 418 residues: Gamma-glutamyl phosphate reductase (418 aa).

It belongs to the gamma-glutamyl phosphate reductase family.

Its subcellular location is the cytoplasm. The catalysed reaction is L-glutamate 5-semialdehyde + phosphate + NADP(+) = L-glutamyl 5-phosphate + NADPH + H(+). The protein operates within amino-acid biosynthesis; L-proline biosynthesis; L-glutamate 5-semialdehyde from L-glutamate: step 2/2. Functionally, catalyzes the NADPH-dependent reduction of L-glutamate 5-phosphate into L-glutamate 5-semialdehyde and phosphate. The product spontaneously undergoes cyclization to form 1-pyrroline-5-carboxylate. The chain is Gamma-glutamyl phosphate reductase from Thermodesulfovibrio yellowstonii (strain ATCC 51303 / DSM 11347 / YP87).